The chain runs to 439 residues: MTVTIIGAGLAGAEAAWQIVRQGVPVQLFEMRPTEMTPAHKTGNFAELVCSNSLRGAALENAVGLLKEEMRRLGSLIMEAADAHAVPAGGALAVDREGFSACITEKLVNHPRITLCREEIREIPAARPLIIASGPLTSPALSRAIQGLTGEDYFYFYDAAAPIVYAESVDLSVAFWASRYDKGDADYLNCPMDESEYDRFYEALVTAEAHPLKEFEKEIYFEGCMPVEVMAKRGKQTLLFGPLKPVGLIDPRTGRRPFAVVQLRKENRQGSMYNLVGFQTHLKWPEQKRVFRMIPGLEQAEFVRYGVMHRNTFINSPTLLLPTYQLRKDPSVFFAGQITGVEGYVESAAAGLVAGLNAARLVQGRSPLRFPPETAIGALPAYITTAEAKHFQPMNVTYGLFPPLVEKVKGKRPRQQAHARRALESLERFMAENLIVKEI.

7 to 12 (GAGLAG) is an FAD binding site.

This sequence belongs to the MnmG family. TrmFO subfamily. FAD is required as a cofactor.

It localises to the cytoplasm. It catalyses the reaction uridine(54) in tRNA + (6R)-5,10-methylene-5,6,7,8-tetrahydrofolate + NADH + H(+) = 5-methyluridine(54) in tRNA + (6S)-5,6,7,8-tetrahydrofolate + NAD(+). It carries out the reaction uridine(54) in tRNA + (6R)-5,10-methylene-5,6,7,8-tetrahydrofolate + NADPH + H(+) = 5-methyluridine(54) in tRNA + (6S)-5,6,7,8-tetrahydrofolate + NADP(+). Its function is as follows. Catalyzes the folate-dependent formation of 5-methyl-uridine at position 54 (M-5-U54) in all tRNAs. In Heliobacterium modesticaldum (strain ATCC 51547 / Ice1), this protein is Methylenetetrahydrofolate--tRNA-(uracil-5-)-methyltransferase TrmFO.